A 547-amino-acid chain; its full sequence is Chaperonin GroEL (547 aa).

ATP contacts are provided by residues 30-33, lysine 51, 87-91, glycine 415, and aspartate 496; these read TLGP and DGTTT. The segment at 528 to 547 is disordered; it reads KEEPMPMRGSGMGGMGGMDF. The segment covering 537–547 has biased composition (gly residues); it reads SGMGGMGGMDF.

It belongs to the chaperonin (HSP60) family. As to quaternary structure, forms a cylinder of 14 subunits composed of two heptameric rings stacked back-to-back. Interacts with the co-chaperonin GroES.

Its subcellular location is the cytoplasm. It carries out the reaction ATP + H2O + a folded polypeptide = ADP + phosphate + an unfolded polypeptide.. Together with its co-chaperonin GroES, plays an essential role in assisting protein folding. The GroEL-GroES system forms a nano-cage that allows encapsulation of the non-native substrate proteins and provides a physical environment optimized to promote and accelerate protein folding. The protein is Chaperonin GroEL of Rickettsia canadensis (strain McKiel).